Reading from the N-terminus, the 251-residue chain is Imidazole glycerol phosphate synthase subunit HisF (251 aa).

Active-site residues include Asp11 and Asp130.

It belongs to the HisA/HisF family. In terms of assembly, heterodimer of HisH and HisF.

It is found in the cytoplasm. The catalysed reaction is 5-[(5-phospho-1-deoxy-D-ribulos-1-ylimino)methylamino]-1-(5-phospho-beta-D-ribosyl)imidazole-4-carboxamide + L-glutamine = D-erythro-1-(imidazol-4-yl)glycerol 3-phosphate + 5-amino-1-(5-phospho-beta-D-ribosyl)imidazole-4-carboxamide + L-glutamate + H(+). Its pathway is amino-acid biosynthesis; L-histidine biosynthesis; L-histidine from 5-phospho-alpha-D-ribose 1-diphosphate: step 5/9. In terms of biological role, IGPS catalyzes the conversion of PRFAR and glutamine to IGP, AICAR and glutamate. The HisF subunit catalyzes the cyclization activity that produces IGP and AICAR from PRFAR using the ammonia provided by the HisH subunit. The sequence is that of Imidazole glycerol phosphate synthase subunit HisF from Chlorobium luteolum (strain DSM 273 / BCRC 81028 / 2530) (Pelodictyon luteolum).